Reading from the N-terminus, the 519-residue chain is Chaperone SurA (519 aa).

An N-terminal signal peptide occupies residues 1–31; sequence MMRSLHSLRRMSGTVLALMLAAGLPLSAAQA. 2 stretches are compositionally biased toward low complexity: residues 31-45 and 197-207; these read AQPA…QKPA and PAAAQATRAPA. 2 disordered regions span residues 31-50 and 196-221; these read AQPA…PAPS and NPAA…PAQS. A PpiC 1 domain is found at 223-324; it reads PAMLVLAQIL…NGFHILKVVD (102 aa). The interval 328-361 is disordered; sequence GGQPAQAARPAPAPAPQQPSSFQEGPSVAAPQGP. The region spanning 364-463 is the PpiC 2 domain; the sequence is VTQTHARHIL…FGWHLIQVLE (100 aa).

The protein localises to the periplasm. It carries out the reaction [protein]-peptidylproline (omega=180) = [protein]-peptidylproline (omega=0). Functionally, chaperone involved in the correct folding and assembly of outer membrane proteins. Recognizes specific patterns of aromatic residues and the orientation of their side chains, which are found more frequently in integral outer membrane proteins. May act in both early periplasmic and late outer membrane-associated steps of protein maturation. In Bordetella pertussis (strain Tohama I / ATCC BAA-589 / NCTC 13251), this protein is Chaperone SurA.